Here is a 163-residue protein sequence, read N- to C-terminus: Nucleotide-binding protein MAV_4575 (163 aa).

Belongs to the YajQ family.

Its function is as follows. Nucleotide-binding protein. The protein is Nucleotide-binding protein MAV_4575 of Mycobacterium avium (strain 104).